The primary structure comprises 1111 residues: RecBCD enzyme subunit RecC (1111 aa).

The protein belongs to the RecC family. As to quaternary structure, heterotrimer of RecB, RecC and RecD. All subunits contribute to DNA-binding.

In terms of biological role, a helicase/nuclease that prepares dsDNA breaks (DSB) for recombinational DNA repair. Binds to DSBs and unwinds DNA via a highly rapid and processive ATP-dependent bidirectional helicase activity. Unwinds dsDNA until it encounters a Chi (crossover hotspot instigator) sequence from the 3' direction. Cuts ssDNA a few nucleotides 3' to the Chi site. The properties and activities of the enzyme are changed at Chi. The Chi-altered holoenzyme produces a long 3'-ssDNA overhang and facilitates RecA-binding to the ssDNA for homologous DNA recombination and repair. Holoenzyme degrades any linearized DNA that is unable to undergo homologous recombination. In the holoenzyme this subunit recognizes the wild-type Chi sequence, and when added to isolated RecB increases its ATP-dependent helicase processivity. This Buchnera aphidicola subsp. Baizongia pistaciae (strain Bp) protein is RecBCD enzyme subunit RecC.